Reading from the N-terminus, the 769-residue chain is Sensor histidine kinase ComP (769 aa).

Residues 1–9 (MKNLIKKFT) lie on the Cytoplasmic side of the membrane. A helical transmembrane segment spans residues 10-33 (IAVIVLSILYISYTTYISMNGIII). Topologically, residues 34–113 (GTKIHKNDKS…DFDLVTLNRP (80 aa)) are extracellular. The helical transmembrane segment at 114-134 (YSFFLFVLPLFFYFLSIICIF) threads the bilayer. The Cytoplasmic portion of the chain corresponds to 135 to 144 (YILKVNKKRR). Residues 145 to 167 (SFAAYILILLLLDISIAYISAGG) form a helical membrane-spanning segment. Residues 168–235 (PFRGHIINRY…QDYLQVDIDF (68 aa)) are Extracellular-facing. The helical transmembrane segment at 236–257 (LATLNLVSFATLTLFSFSAIYL) threads the bilayer. Over 258-272 (HLNKYKYAEHSFILK) the chain is Cytoplasmic. A helical transmembrane segment spans residues 273-295 (LLILTNTLSFAPFLIFFVLPIIF). The Extracellular portion of the chain corresponds to 296-299 (TGNY). Residues 300-323 (IFPALASASLLVLIPFGLVYQFVA) traverse the membrane as a helical segment. At 324-337 (NKMFDIEFILGRMR) the chain is on the cytoplasmic side. The chain crosses the membrane as a helical span at residues 338-357 (YYALLAMIPTLLIVGALVLF). Residues 358 to 361 (DVMD) lie on the Extracellular side of the membrane. A helical transmembrane segment spans residues 362–383 (IQMNPVRQTVFFFVVMFAVFYF). Topologically, residues 384–769 (KEVMDFKFRL…GFKADIEIEL (386 aa)) are cytoplasmic. The Histidine kinase domain maps to 571–769 (LARDLHDSVL…GFKADIEIEL (199 aa)). Position 576 is a phosphohistidine; by autocatalysis (His576).

Post-translationally, autophosphorylates on a histidine and transfers the phosphate group onto an aspartate in ComA, thus activating it.

Its subcellular location is the cell membrane. It catalyses the reaction ATP + protein L-histidine = ADP + protein N-phospho-L-histidine.. Sensor in the two-component regulatory system ComP/ComA involved in a major quorum response pathway that regulates the development of genetic competence. Plays a role in sporulation, at least partly interchangeable with that of SpoIIJ. Probably activates ComA by phosphorylation. This is Sensor histidine kinase ComP (comP) from Bacillus subtilis (strain 168).